Here is a 374-residue protein sequence, read N- to C-terminus: Coiled-coil domain-containing protein 89 (374 aa).

Residues 1 to 40 (MRAPMLQKQQAPRMDTPPPEERLEKQNEKLNNQEEETEFK) form a disordered region. T16 is modified (phosphothreonine). A compositionally biased stretch (basic and acidic residues) spans 19-32 (PEERLEKQNEKLNN). A coiled-coil region spans residues 20–351 (EERLEKQNEK…DELRLQSEAF (332 aa)).

This sequence belongs to the CCDC89 family. Interacts with HEY1.

It localises to the cytoplasm. It is found in the nucleus. The chain is Coiled-coil domain-containing protein 89 (CCDC89) from Homo sapiens (Human).